Consider the following 190-residue polypeptide: Potassium-transporting ATPase KdpC subunit (190 aa).

Residues 9–29 (VMFILFTIICGGIYPSVVTGI) form a helical membrane-spanning segment.

This sequence belongs to the KdpC family. The system is composed of three essential subunits: KdpA, KdpB and KdpC.

The protein localises to the cell inner membrane. Functionally, part of the high-affinity ATP-driven potassium transport (or Kdp) system, which catalyzes the hydrolysis of ATP coupled with the electrogenic transport of potassium into the cytoplasm. This subunit acts as a catalytic chaperone that increases the ATP-binding affinity of the ATP-hydrolyzing subunit KdpB by the formation of a transient KdpB/KdpC/ATP ternary complex. The chain is Potassium-transporting ATPase KdpC subunit from Citrifermentans bemidjiense (strain ATCC BAA-1014 / DSM 16622 / JCM 12645 / Bem) (Geobacter bemidjiensis).